A 91-amino-acid polypeptide reads, in one-letter code: UPF0358 protein SSP1677 (91 aa).

This sequence belongs to the UPF0358 family.

This Staphylococcus saprophyticus subsp. saprophyticus (strain ATCC 15305 / DSM 20229 / NCIMB 8711 / NCTC 7292 / S-41) protein is UPF0358 protein SSP1677.